The primary structure comprises 73 residues: Disintegrin molossin (73 aa).

The Disintegrin domain occupies 1-73; that stretch reads EAGIECDCGS…ADCPRNRFHA (73 aa). 6 cysteine pairs are disulfide-bonded: cysteine 6–cysteine 21, cysteine 8–cysteine 16, cysteine 15–cysteine 38, cysteine 29–cysteine 35, cysteine 34–cysteine 59, and cysteine 47–cysteine 66. Residues 51-53 carry the Cell attachment site motif; the sequence is RGD.

Belongs to the venom metalloproteinase (M12B) family. P-II subfamily. P-IIa sub-subfamily. As to quaternary structure, monomer (disintegrin). Expressed by the venom gland.

Its subcellular location is the secreted. Inhibits fibrinogen interaction with platelets. Acts by binding to alpha-IIb/beta-3 (ITGA2B/ITGB3) on the platelet surface and inhibits aggregation induced by ADP, thrombin, platelet-activating factor and collagen. This Crotalus molossus molossus (Northern black-tailed rattlesnake) protein is Disintegrin molossin.